Reading from the N-terminus, the 1025-residue chain is Multidrug resistance protein MdtC (1025 aa).

The next 12 membrane-spanning stretches (helical) occupy residues 3-23 (FFAL…AITL), 333-353 (EVEQ…FLFL), 360-380 (IIPA…MYLC), 387-407 (LSLM…IVVL), 431-451 (VGFT…PLLL), 463-483 (FAVT…TLTP), 528-548 (LVGV…ISIP), 853-873 (VILI…LYES), 875-895 (VHPL…LLAL), 897-917 (LFNA…IGIV), 953-973 (PIMM…LSGG), and 984-1004 (ITIV…TPVV).

This sequence belongs to the resistance-nodulation-cell division (RND) (TC 2.A.6) family. MdtC subfamily. Part of a tripartite efflux system composed of MdtA, MdtB and MdtC. MdtC forms a heteromultimer with MdtB.

It is found in the cell inner membrane. In terms of biological role, the MdtABC tripartite complex confers resistance against novobiocin and deoxycholate. The polypeptide is Multidrug resistance protein MdtC (Escherichia coli O127:H6 (strain E2348/69 / EPEC)).